A 271-amino-acid chain; its full sequence is Methylcorrinoid:tetrahydrofolate methyltransferase (271 aa).

In terms of domain architecture, Pterin-binding spans 1–247 (MIIIGEKLNG…GAIFATDALL (247 aa)).

It belongs to the vitamin-B12 dependent methionine synthase family. In terms of assembly, the proline betaine:THF methyl transfer system is composed of two methyltransferases, MtpB and MtqA, and the corrinoid protein MtqC. The L-carnitine:THF methyl transfer system is composed of two methyltransferases, MtcB and MtqA, and the corrinoid protein MtqC.

It catalyses the reaction methyl-Co(III)-[quaternary-amine-specific corrinoid protein] + (6S)-5,6,7,8-tetrahydrofolate = Co(I)-[quaternary-amine-specific corrinoid protein] + (6S)-5-methyl-5,6,7,8-tetrahydrofolate + H(+). Functionally, involved in the degradation of the quaternary amines L-proline betaine and L-carnitine. Component of a corrinoid-dependent methyltransferase system that transfers a methyl group from L-proline betaine or L-carnitine to tetrahydrofolate (THF), forming methyl-THF, a key intermediate in the Wood-Ljungdahl acetogenesis pathway. MtqA catalyzes the transfer of a methyl group from the methylated corrinoid protein MtqC to THF, forming methyl-THF. The polypeptide is Methylcorrinoid:tetrahydrofolate methyltransferase (Eubacterium limosum).